The following is a 100-amino-acid chain: Small ribosomal subunit protein uS14c (100 aa).

This sequence belongs to the universal ribosomal protein uS14 family. As to quaternary structure, part of the 30S ribosomal subunit.

The protein resides in the plastid. Its subcellular location is the chloroplast. Functionally, binds 16S rRNA, required for the assembly of 30S particles. This is Small ribosomal subunit protein uS14c from Oedogonium cardiacum (Filamentous green alga).